A 203-amino-acid polypeptide reads, in one-letter code: MSEILELEAESRTEFGTGAARALRRAGRVPAIIYGAGKTPVSISLEEKEITKYYRKPAFISQLINLTIDKKKYKVLPKAVELHPVTDIVRHVDFVFLEEKTQKMEVPVVYEGKERALGVKRGGYFNIVKRRVTLLCDVNNIPRNVTIDVTNMPMATSLKSSKIELPKGCSFVTKKEFVLATIIGRRGAKTEAEGEQQAAEAGK.

Belongs to the bacterial ribosomal protein bL25 family. CTC subfamily. As to quaternary structure, part of the 50S ribosomal subunit; part of the 5S rRNA/L5/L18/L25 subcomplex. Contacts the 5S rRNA. Binds to the 5S rRNA independently of L5 and L18.

Functionally, this is one of the proteins that binds to the 5S RNA in the ribosome where it forms part of the central protuberance. The protein is Large ribosomal subunit protein bL25 of Rickettsia peacockii (strain Rustic).